Consider the following 413-residue polypeptide: Serine hydroxymethyltransferase (413 aa).

(6S)-5,6,7,8-tetrahydrofolate contacts are provided by residues Leu117 and 121-123 (GHL). Lys226 bears the N6-(pyridoxal phosphate)lysine mark. 349-351 (SPF) provides a ligand contact to (6S)-5,6,7,8-tetrahydrofolate.

It belongs to the SHMT family. In terms of assembly, homodimer. Pyridoxal 5'-phosphate serves as cofactor.

Its subcellular location is the cytoplasm. It catalyses the reaction (6R)-5,10-methylene-5,6,7,8-tetrahydrofolate + glycine + H2O = (6S)-5,6,7,8-tetrahydrofolate + L-serine. It functions in the pathway one-carbon metabolism; tetrahydrofolate interconversion. Its pathway is amino-acid biosynthesis; glycine biosynthesis; glycine from L-serine: step 1/1. Catalyzes the reversible interconversion of serine and glycine with tetrahydrofolate (THF) serving as the one-carbon carrier. This reaction serves as the major source of one-carbon groups required for the biosynthesis of purines, thymidylate, methionine, and other important biomolecules. Also exhibits THF-independent aldolase activity toward beta-hydroxyamino acids, producing glycine and aldehydes, via a retro-aldol mechanism. The chain is Serine hydroxymethyltransferase from Listeria monocytogenes serotype 4b (strain F2365).